We begin with the raw amino-acid sequence, 181 residues long: Ribonuclease HII (181 aa).

In terms of domain architecture, RNase H type-2 spans Met1–Ile181. 3 residues coordinate a divalent metal cation: Asp6, Glu7, and Asp98.

The protein belongs to the RNase HII family. Mn(2+) is required as a cofactor. It depends on Mg(2+) as a cofactor.

Its subcellular location is the cytoplasm. The catalysed reaction is Endonucleolytic cleavage to 5'-phosphomonoester.. In terms of biological role, endonuclease that specifically degrades the RNA of RNA-DNA hybrids. In Borreliella afzelii (strain PKo) (Borrelia afzelii), this protein is Ribonuclease HII.